A 150-amino-acid chain; its full sequence is uncharacterized protein (150 aa).

This sequence belongs to the OsmC/Ohr family.

This is an uncharacterized protein from Bacillus subtilis (strain 168).